Here is an 88-residue protein sequence, read N- to C-terminus: Small ribosomal subunit protein bS20 (88 aa).

Positions 1-25 are disordered; sequence MANTAQALKRIRQTNKARAQNASQR. The span at 16-25 shows a compositional bias: polar residues; it reads KARAQNASQR.

It belongs to the bacterial ribosomal protein bS20 family.

Binds directly to 16S ribosomal RNA. The sequence is that of Small ribosomal subunit protein bS20 from Dichelobacter nodosus (strain VCS1703A).